A 228-amino-acid chain; its full sequence is Cytidylate kinase (228 aa).

17 to 25 (GPTASGKGT) lines the ATP pocket.

It belongs to the cytidylate kinase family. Type 1 subfamily.

It is found in the cytoplasm. It carries out the reaction CMP + ATP = CDP + ADP. The enzyme catalyses dCMP + ATP = dCDP + ADP. The sequence is that of Cytidylate kinase from Burkholderia ambifaria (strain MC40-6).